A 102-amino-acid chain; its full sequence is Small ribosomal subunit protein uS10 (102 aa).

It belongs to the universal ribosomal protein uS10 family. Part of the 30S ribosomal subunit.

Functionally, involved in the binding of tRNA to the ribosomes. The sequence is that of Small ribosomal subunit protein uS10 from Rhodopseudomonas palustris (strain BisB18).